The chain runs to 783 residues: Tricorn protease-interacting factor F2 (783 aa).

Substrate is bound by residues Glu-107 and 236 to 240 (GAMEN). His-271 lines the Zn(2+) pocket. The Proton acceptor role is filled by Glu-272. Positions 275 and 294 each coordinate Zn(2+).

The protein belongs to the peptidase M1 family. In terms of assembly, monomer. Part of the Tricorn proteolytic complex. Requires Zn(2+) as cofactor.

It localises to the cytoplasm. Proteases F1, F2 and F3 degrade oligopeptides produced by Tricorn (themselves probably produced by the proteasome), yielding free amino acids. This is Tricorn protease-interacting factor F2 (trf2) from Thermoplasma volcanium (strain ATCC 51530 / DSM 4299 / JCM 9571 / NBRC 15438 / GSS1).